Consider the following 274-residue polypeptide: Dermonecrotic toxin SdSicTox-betaIIB1biii (274 aa).

Residue His-5 is part of the active site. Mg(2+) is bound by residues Glu-25 and Asp-27. Catalysis depends on His-41, which acts as the Nucleophile. 2 cysteine pairs are disulfide-bonded: Cys-45/Cys-51 and Cys-47/Cys-190. Asp-85 serves as a coordination point for Mg(2+).

This sequence belongs to the arthropod phospholipase D family. Class II subfamily. Mg(2+) is required as a cofactor. As to expression, expressed by the venom gland.

The protein localises to the secreted. The catalysed reaction is an N-(acyl)-sphingosylphosphocholine = an N-(acyl)-sphingosyl-1,3-cyclic phosphate + choline. The enzyme catalyses an N-(acyl)-sphingosylphosphoethanolamine = an N-(acyl)-sphingosyl-1,3-cyclic phosphate + ethanolamine. It catalyses the reaction a 1-acyl-sn-glycero-3-phosphocholine = a 1-acyl-sn-glycero-2,3-cyclic phosphate + choline. It carries out the reaction a 1-acyl-sn-glycero-3-phosphoethanolamine = a 1-acyl-sn-glycero-2,3-cyclic phosphate + ethanolamine. Functionally, dermonecrotic toxins cleave the phosphodiester linkage between the phosphate and headgroup of certain phospholipids (sphingolipid and lysolipid substrates), forming an alcohol (often choline) and a cyclic phosphate. This toxin acts on sphingomyelin (SM). It may also act on ceramide phosphoethanolamine (CPE), lysophosphatidylcholine (LPC) and lysophosphatidylethanolamine (LPE), but not on lysophosphatidylserine (LPS), and lysophosphatidylglycerol (LPG). It acts by transphosphatidylation, releasing exclusively cyclic phosphate products as second products. Induces dermonecrosis, hemolysis, increased vascular permeability, edema, inflammatory response, and platelet aggregation. This chain is Dermonecrotic toxin SdSicTox-betaIIB1biii, found in Sicarius cf. damarensis (strain GJB-2008) (Six-eyed sand spider).